The sequence spans 84 residues: U8-theraphotoxin-Hhn1c 1 (84 aa).

The N-terminal stretch at 1 to 21 (MKVVLIVCLVWVMAMMELVSC) is a signal peptide. Disulfide bonds link C23-C35, C29-C44, C34-C67, C54-C75, and C69-C81.

Belongs to the AVIT (prokineticin) family. Expressed by the venom gland.

It localises to the secreted. In Cyriopagopus hainanus (Chinese bird spider), this protein is U8-theraphotoxin-Hhn1c 1.